Consider the following 196-residue polypeptide: Lipoprotein signal peptidase (196 aa).

A run of 3 helical transmembrane segments spans residues 17–37, 73–93, and 96–116; these read SIII…IDNL, SNAI…YLMI, and NTIG…GNLI. Catalysis depends on residues D126 and D144. A helical transmembrane segment spans residues 135–155; the sequence is YSFPVFNLADCFITIGVIILI.

This sequence belongs to the peptidase A8 family.

The protein resides in the cell inner membrane. The enzyme catalyses Release of signal peptides from bacterial membrane prolipoproteins. Hydrolyzes -Xaa-Yaa-Zaa-|-(S,diacylglyceryl)Cys-, in which Xaa is hydrophobic (preferably Leu), and Yaa (Ala or Ser) and Zaa (Gly or Ala) have small, neutral side chains.. The protein operates within protein modification; lipoprotein biosynthesis (signal peptide cleavage). In terms of biological role, this protein specifically catalyzes the removal of signal peptides from prolipoproteins. The chain is Lipoprotein signal peptidase from Rickettsia akari (strain Hartford).